The following is a 530-amino-acid chain: uncharacterized protein (530 aa).

5 consecutive transmembrane segments (helical) span residues 4–23 (FLAA…GLAI), 28–47 (LFGV…VVST), 57–79 (FVFQ…PAFF), 91–113 (LFMI…AFGL), and 148–170 (VIGY…AVGA). Residues 260 to 344 (LGGECDTKIE…MGEVRRFLGD (85 aa)) form the RCK C-terminal domain. A run of 4 helical transmembrane segments spans residues 352–374 (VNLL…PVPL), 379–398 (TMYL…LGAL), 419–441 (LGLA…QALT), and 451–473 (VGFA…LLKL).

It belongs to the AAE transporter (TC 2.A.81) family.

It is found in the cell membrane. This is an uncharacterized protein from Corynebacterium efficiens (strain DSM 44549 / YS-314 / AJ 12310 / JCM 11189 / NBRC 100395).